The sequence spans 855 residues: MLTKRFYNLAIMQDISNHTPMIQQYLKIKSQYQDILLFYRMGDFYELFFDDAKKAAELLDITLTARGKSNGESIPMAGVPYHAAEAYIAKIVKKGLSIAICEQTGDPNTSKGPVERQVTRIITPATVSEEAFLDNNQDSILVSIFEKNNKYYLAYTSYTQGKIYLVKTLTSLNELKNTVLKLSPQEIITNSRELAQQNPFKKPIKALEEWYYSNFEAKKYINDSLDTNIANNILNLYKNDQLTTIGSILSYLTNILKDTPRHITDISYEQEQDTLNIDINSRINLELDNNSKSSLLSIIGKCKTSLGSRLLKRYFSNPTRNLNILATRHSIINSLGENQHFLKIQDVLSYISDIERIISRVALGTVKPKDLVALRYSLEQLPILKKLLSEKNTPEITNINNRIHQLDELVTLLDKAIIENPPTTIRDGGVIKEGFDKELDELKSIKDNSYDFLIKFEELQKQKIGISTLKVGYNRVHGYYIELSKQHADKIPTEYVRRQTLKASERYITEELKNFEDKVLSSKEKALAREKLIYDTLLKKVIEYYKQIQETAASIAEIDVLANFAERAIKLKLSQPKFNNLAKLELKEVRHLAIEHNIDEPFIPNDTLLSKDTNTLQIITGPNMGGKSTYMRQVAQLIFLAYIGSFVPASYADICDIDTIYTRIGASDDISSGRSTFMVEMTETAYILNNASAKSLVIMDEIGRGTSTFDGLALAKACAEKFAQMGAFTLFATHYFELTELAKQYPNVCNIHFEAKEYKDNIYFMHKAVTGAAKKSYGIQVAKLAGISQDVLESAKQNLYNLEKKQQLTESTQVQAQFQLEPTTQNPLQQKLDAIDINTITPLEALNILFELKKR.

Residue 621 to 628 (GPNMGGKS) coordinates ATP.

This sequence belongs to the DNA mismatch repair MutS family.

Its function is as follows. This protein is involved in the repair of mismatches in DNA. It is possible that it carries out the mismatch recognition step. This protein has a weak ATPase activity. This chain is DNA mismatch repair protein MutS, found in Francisella tularensis subsp. holarctica (strain OSU18).